Consider the following 272-residue polypeptide: Type III pantothenate kinase (272 aa).

6–13 is a binding site for ATP; the sequence is DVRNTHTV. 109–112 contacts substrate; it reads GADR. D111 (proton acceptor) is an active-site residue. D131 lines the K(+) pocket. Residue S134 participates in ATP binding. T186 is a substrate binding site.

The protein belongs to the type III pantothenate kinase family. In terms of assembly, homodimer. NH4(+) serves as cofactor. Requires K(+) as cofactor.

It is found in the cytoplasm. The enzyme catalyses (R)-pantothenate + ATP = (R)-4'-phosphopantothenate + ADP + H(+). It participates in cofactor biosynthesis; coenzyme A biosynthesis; CoA from (R)-pantothenate: step 1/5. Functionally, catalyzes the phosphorylation of pantothenate (Pan), the first step in CoA biosynthesis. The sequence is that of Type III pantothenate kinase from Mycobacterium bovis (strain BCG / Pasteur 1173P2).